The following is a 411-amino-acid chain: 6-hydroxytryprostatin B O-methyltransferase (411 aa).

Aspartate 270 serves as a coordination point for S-adenosyl-L-methionine. Histidine 313 acts as the Proton acceptor in catalysis.

This sequence belongs to the class I-like SAM-binding methyltransferase superfamily. Cation-independent O-methyltransferase family. In terms of assembly, homodimer.

The catalysed reaction is 6-hydroxytryprostatin B + S-adenosyl-L-methionine = tryprostatin A + S-adenosyl-L-homocysteine + H(+). It functions in the pathway alkaloid biosynthesis. Functionally, 6-hydroxytryprostatin B O-methyltransferase; part of the gene cluster that mediates the biosynthesis of fumitremorgins, indole alkaloids that carry not only intriguing chemical structures, but also interesting biological and pharmacological activities. The biosynthesis of fumitremorgin-type alkaloids begins by condensation of the two amino acids L-tryptophan and L-proline to brevianamide F, catalyzed by the non-ribosomal peptide synthetase ftmPS/ftmA. Brevianamide F is then prenylated by the prenyltransferase ftmPT1/ftmB in the presence of dimethylallyl diphosphate, resulting in the formation of tryprostatin B. The three cytochrome P450 monooxygenases, ftmP450-1/ftmC, ftmP450-2/ftmE and ftmP450-3/FtmG, are responsible for the conversion of tryprostatin B to 6-hydroxytryprostatin B, tryprostatin A to fumitremorgin C and fumitremorgin C to 12,13-dihydroxyfumitremorgin C, respectively. The putative methyltransferase ftmMT/ftmD is expected for the conversion of 6-hydroxytryprostatin B to tryprostatin A. FtmPT2/FtmH catalyzes the prenylation of 12,13-dihydroxyfumitre-morgin C in the presence of dimethylallyl diphosphate, resulting in the formation of fumitremorgin B. Fumitremorgin B is further converted to verruculogen by ftmOx1/ftmF via the insertion of an endoperoxide bond between the two prenyl moieties. Finally, verruculogen is further converted to fumitremorgin A by the verruculogen prenyltransferase ftmPT3. The protein is 6-hydroxytryprostatin B O-methyltransferase of Neosartorya fischeri (strain ATCC 1020 / DSM 3700 / CBS 544.65 / FGSC A1164 / JCM 1740 / NRRL 181 / WB 181) (Aspergillus fischerianus).